Consider the following 252-residue polypeptide: uncharacterized protein (252 aa).

Belongs to the GSP E family.

This is an uncharacterized protein from Methanocaldococcus jannaschii (strain ATCC 43067 / DSM 2661 / JAL-1 / JCM 10045 / NBRC 100440) (Methanococcus jannaschii).